A 313-amino-acid polypeptide reads, in one-letter code: D-alanine--D-alanine ligase (313 aa).

Positions 108 to 308 (KLVWQQTGVP…YSELVVKVLS (201 aa)) constitute an ATP-grasp domain. 138 to 193 (VAKLGLPLFVKPASEGSSVAVLKVKTADALPAALAEAATHDKIVIVEKSIEGGGEY) is an ATP binding site. Residues D262, E275, and N277 each contribute to the Mg(2+) site.

The protein belongs to the D-alanine--D-alanine ligase family. Mg(2+) is required as a cofactor. It depends on Mn(2+) as a cofactor.

The protein resides in the cytoplasm. It carries out the reaction 2 D-alanine + ATP = D-alanyl-D-alanine + ADP + phosphate + H(+). The protein operates within cell wall biogenesis; peptidoglycan biosynthesis. Cell wall formation. This chain is D-alanine--D-alanine ligase, found in Burkholderia orbicola (strain MC0-3).